A 154-amino-acid chain; its full sequence is Superoxide dismutase [Cu-Zn] (154 aa).

Cu cation contacts are provided by His-47, His-49, and His-64. Cys-58 and Cys-147 are oxidised to a cystine. Zn(2+)-binding residues include His-64, His-72, His-81, and Asp-84. Residue His-121 coordinates Cu cation.

It belongs to the Cu-Zn superoxide dismutase family. Homodimer. It depends on Cu cation as a cofactor. The cofactor is Zn(2+).

It is found in the cytoplasm. It carries out the reaction 2 superoxide + 2 H(+) = H2O2 + O2. Its function is as follows. Destroys radicals which are normally produced within the cells and which are toxic to biological systems. This chain is Superoxide dismutase [Cu-Zn] (SODCC), found in Pinus sylvestris (Scotch pine).